The following is a 136-amino-acid chain: Large ribosomal subunit protein uL16c (136 aa).

It belongs to the universal ribosomal protein uL16 family. In terms of assembly, part of the 50S ribosomal subunit.

Its subcellular location is the plastid. It is found in the chloroplast. This is Large ribosomal subunit protein uL16c from Zea mays (Maize).